Reading from the N-terminus, the 269-residue chain is Cytochrome c oxidase subunit 3 (269 aa).

Transmembrane regions (helical) follow at residues 46 to 66 (NSYY…AFWF), 90 to 110 (GVIL…WAFF), 138 to 160 (PLLN…HSLI), 167 to 187 (ALYG…FQGV), 207 to 227 (FGTG…AVAL), and 247 to 267 (ILYW…IYYW).

Belongs to the cytochrome c oxidase subunit 3 family. Component of the cytochrome c oxidase (complex IV, CIV), a multisubunit enzyme composed of a catalytic core of 3 subunits and several supernumerary subunits. The complex exists as a monomer or a dimer and forms supercomplexes (SCs) in the inner mitochondrial membrane with ubiquinol-cytochrome c oxidoreductase (cytochrome b-c1 complex, complex III, CIII).

Its subcellular location is the mitochondrion inner membrane. It carries out the reaction 4 Fe(II)-[cytochrome c] + O2 + 8 H(+)(in) = 4 Fe(III)-[cytochrome c] + 2 H2O + 4 H(+)(out). In terms of biological role, component of the cytochrome c oxidase, the last enzyme in the mitochondrial electron transport chain which drives oxidative phosphorylation. The respiratory chain contains 3 multisubunit complexes succinate dehydrogenase (complex II, CII), ubiquinol-cytochrome c oxidoreductase (cytochrome b-c1 complex, complex III, CIII) and cytochrome c oxidase (complex IV, CIV), that cooperate to transfer electrons derived from NADH and succinate to molecular oxygen, creating an electrochemical gradient over the inner membrane that drives transmembrane transport and the ATP synthase. Cytochrome c oxidase is the component of the respiratory chain that catalyzes the reduction of oxygen to water. Electrons originating from reduced cytochrome c in the intermembrane space (IMS) are transferred via the dinuclear copper A center (CU(A)) of subunit 2 and heme A of subunit 1 to the active site in subunit 1, a binuclear center (BNC) formed by heme A3 and copper B (CU(B)). The BNC reduces molecular oxygen to 2 water molecules using 4 electrons from cytochrome c in the IMS and 4 protons from the mitochondrial matrix. The protein is Cytochrome c oxidase subunit 3 (COIII) of Podospora anserina (strain S / ATCC MYA-4624 / DSM 980 / FGSC 10383) (Pleurage anserina).